The chain runs to 106 residues: Cell division protein FtsB (106 aa).

The Cytoplasmic portion of the chain corresponds to 1-3 (MRL). Residues 4 to 21 (LTLIFVALIALLQYPLWL) traverse the membrane as a helical segment. Residues 22-106 (GKGSWLRVWD…SPPAALTGAQ (85 aa)) are Periplasmic-facing. The stretch at 31–73 (DLNQKIVAQKAVNAELKLRNDTLDAEVRDLKQGNAAIEERARS) forms a coiled coil.

It belongs to the FtsB family. Part of a complex composed of FtsB, FtsL and FtsQ.

Its subcellular location is the cell inner membrane. In terms of biological role, essential cell division protein. May link together the upstream cell division proteins, which are predominantly cytoplasmic, with the downstream cell division proteins, which are predominantly periplasmic. In Methylobacillus flagellatus (strain ATCC 51484 / DSM 6875 / VKM B-1610 / KT), this protein is Cell division protein FtsB.